A 233-amino-acid chain; its full sequence is 2,3,4,5-tetrahydropyridine-2,6-dicarboxylate N-acetyltransferase (233 aa).

It belongs to the transferase hexapeptide repeat family. DapH subfamily.

It catalyses the reaction (S)-2,3,4,5-tetrahydrodipicolinate + acetyl-CoA + H2O = L-2-acetamido-6-oxoheptanedioate + CoA. The protein operates within amino-acid biosynthesis; L-lysine biosynthesis via DAP pathway; LL-2,6-diaminopimelate from (S)-tetrahydrodipicolinate (acetylase route): step 1/3. Its function is as follows. Catalyzes the transfer of an acetyl group from acetyl-CoA to tetrahydrodipicolinate. The chain is 2,3,4,5-tetrahydropyridine-2,6-dicarboxylate N-acetyltransferase from Enterococcus faecalis (strain ATCC 700802 / V583).